We begin with the raw amino-acid sequence, 172 residues long: Large ribosomal subunit protein uL10 (172 aa).

The protein belongs to the universal ribosomal protein uL10 family. As to quaternary structure, part of the ribosomal stalk of the 50S ribosomal subunit. The N-terminus interacts with L11 and the large rRNA to form the base of the stalk. The C-terminus forms an elongated spine to which L12 dimers bind in a sequential fashion forming a multimeric L10(L12)X complex.

Forms part of the ribosomal stalk, playing a central role in the interaction of the ribosome with GTP-bound translation factors. The protein is Large ribosomal subunit protein uL10 of Rhodopseudomonas palustris (strain TIE-1).